The sequence spans 234 residues: MVINIFYICTGEYKRFFDKFYLSCEDKFIPEFGKKYYVFTDSDRIYFSKYLNVEVINVEKNCWPLNTLLRFSYFLKVIDKLQTNSYTFFFNANAVIVKEIPFSTFMESDLIGVIHPGYKNRISILYPWERRKNATCYLGYLKKGIYYQGCFNGGKTASFKRLIQICNMMTMADLKKNLIAKVHDESYLNYYYYYNKPLLLSELYSWPEKYGENKDAKIIMRDKERESWYGNIKK.

Residues 8–13, 93–95, and 115–118 each bind substrate; these read ICTGEY, NAV, and HPGY. Glu185 functions as the Nucleophile in the catalytic mechanism.

This sequence belongs to the glycosyltransferase 6 family. Mn(2+) serves as cofactor.

The enzyme catalyses alpha-L-Fuc-(1-&gt;2)-beta-D-Gal-(1-&gt;3)-alpha-D-GalNAc-(1-&gt;3)-alpha-D-GalNAc-di-trans,octa-cis-undecaprenyl diphosphate + UDP-alpha-D-galactose = alpha-L-Fuc-(1-&gt;2)-[alpha-D-Gal-(1-&gt;3)]-beta-D-Gal-(1-&gt;3)-alpha-D-GalNAc-(1-&gt;3)-alpha-D-GalNAc-di-trans,octa-cis-undecaprenyl diphosphate + UDP + H(+). Its pathway is bacterial outer membrane biogenesis; LPS O-antigen biosynthesis. Functionally, involved in the assembly of the O-repeating unit during O-antigen biosynthesis. The chain is O-antigen biosynthesis glycosyltransferase WbnI from Escherichia coli.